Reading from the N-terminus, the 102-residue chain is Urease subunit beta (102 aa).

It belongs to the urease beta subunit family. Heterotrimer of UreA (gamma), UreB (beta) and UreC (alpha) subunits. Three heterotrimers associate to form the active enzyme.

The protein localises to the cytoplasm. It carries out the reaction urea + 2 H2O + H(+) = hydrogencarbonate + 2 NH4(+). It participates in nitrogen metabolism; urea degradation; CO(2) and NH(3) from urea (urease route): step 1/1. The chain is Urease subunit beta from Trichodesmium erythraeum (strain IMS101).